The sequence spans 202 residues: LexA repressor (202 aa).

Positions Val-29–Thr-49 form a DNA-binding region, H-T-H motif. Active-site for autocatalytic cleavage activity residues include Ser-126 and Lys-163.

Belongs to the peptidase S24 family. As to quaternary structure, homodimer.

It catalyses the reaction Hydrolysis of Ala-|-Gly bond in repressor LexA.. In terms of biological role, represses a number of genes involved in the response to DNA damage (SOS response), including recA and lexA. In the presence of single-stranded DNA, RecA interacts with LexA causing an autocatalytic cleavage which disrupts the DNA-binding part of LexA, leading to derepression of the SOS regulon and eventually DNA repair. In Caldicellulosiruptor saccharolyticus (strain ATCC 43494 / DSM 8903 / Tp8T 6331), this protein is LexA repressor.